Here is a 1054-residue protein sequence, read N- to C-terminus: Translation initiation factor IF-2 (1054 aa).

4 disordered regions span residues 57 to 213 (DKRK…AASC), 225 to 248 (DPLALNSSPQSSAAFCPDARNPGD), 287 to 315 (SGRPRAASRRTAVQRPSGRAGAGASHGLQ), and 401 to 436 (DHAGRGRELVDVSKNKDKSPRKRGGPNDTSISKQEL). Residues 92–104 (QEPSQAASDVSSP) are compositionally biased toward polar residues. Over residues 111-213 (EASGAEAAAS…VTSGRRAASC (103 aa)) the composition is skewed to low complexity. Residues 401–418 (DHAGRGRELVDVSKNKDK) show a composition bias toward basic and acidic residues. The 170-residue stretch at 552 to 721 (TRPPVVTVMG…VLQAEVLELT (170 aa)) folds into the tr-type G domain. Residues 561–568 (GHVDHGKT) form a G1 region. 561–568 (GHVDHGKT) contacts GTP. Residues 586 to 590 (GITQH) are G2. A G3 region spans residues 607–610 (DTPG). GTP contacts are provided by residues 607-611 (DTPGH) and 661-664 (NKMD). The segment at 661–664 (NKMD) is G4. Residues 697–699 (SAK) are G5.

The protein belongs to the TRAFAC class translation factor GTPase superfamily. Classic translation factor GTPase family. IF-2 subfamily.

Its subcellular location is the cytoplasm. In terms of biological role, one of the essential components for the initiation of protein synthesis. Protects formylmethionyl-tRNA from spontaneous hydrolysis and promotes its binding to the 30S ribosomal subunits. Also involved in the hydrolysis of GTP during the formation of the 70S ribosomal complex. The sequence is that of Translation initiation factor IF-2 (infB) from Stigmatella aurantiaca.